Reading from the N-terminus, the 161-residue chain is Ragulator complex protein LAMTOR1 (161 aa).

The interval 1-43 (MGCCYSSENEDSDQDREERKLLLDPSSPPTKALNGAEPNYHSL) is disordered. Gly2 is lipidated: N-myristoyl glycine. 2 S-palmitoyl cysteine lipidation sites follow: Cys3 and Cys4. Residue Lys20 forms a Glycyl lysine isopeptide (Lys-Gly) (interchain with G-Cter in ubiquitin) linkage. Ser27 carries the phosphoserine modification. Lys31 participates in a covalent cross-link: Glycyl lysine isopeptide (Lys-Gly) (interchain with G-Cter in ubiquitin). A phosphoserine mark is found at Ser42 and Ser56. A Glycyl lysine isopeptide (Lys-Gly) (interchain with G-Cter in ubiquitin) cross-link involves residue Lys60. Ser98 is subject to Phosphoserine. Glycyl lysine isopeptide (Lys-Gly) (interchain with G-Cter in ubiquitin) cross-links involve residues Lys103 and Lys104. Residues 121-161 (SEPIPFSDLQQVSRIAAYAYSALSQIRVDAKEELVVQFGIP) form an interaction with LAMTOR2 and LAMTOR3 region. A Phosphoserine modification is found at Ser141.

This sequence belongs to the LAMTOR1 family. In terms of assembly, part of the Ragulator complex composed of LAMTOR1, LAMTOR2, LAMTOR3, LAMTOR4 and LAMTOR5. LAMTOR4 and LAMTOR5 form a heterodimer that interacts, through LAMTOR1, with a LAMTOR2, LAMTOR3 heterodimer. Interacts with LAMTOR2 and LAMTOR3; the interaction is direct. The Ragulator complex interacts with both the mTORC1 complex and heterodimers constituted of the Rag GTPases RagA/RRAGA, RagB/RRAGB, RagC/RRAGC and RagD/RRAGD; regulated by amino acid availability. The Ragulator complex interacts with SLC38A9; the probable amino acid sensor. Component of the lysosomal folliculin complex (LFC), composed of FLCN, FNIP1 (or FNIP2), RagA/RRAGA or RagB/RRAGB GDP-bound, RagC/RRAGC or RagD/RRAGD GTP-bound, and Ragulator. Associates with the lysosomal V-ATPase complex; interaction promotes the guanine nucleotide exchange factor (GEF) of the Ragulator complex. Interacts with MMP14. Interacts with CDKN1B; prevents the interaction of CDKN1B with RHOA leaving RHOA in a form accessible to activation by ARHGEF2. Interacts with PIP4P1. In terms of processing, N-terminal myristoylation and palmitoylation mediates its recruitment to lysosome membranes, thereby promoting localization of the Ragulator complex to lysosomes. N-myristoylation by NMT1 is required for palmitoylation at Cys-3 and Cys-4. May be palmitoylated by ZDHHC3. Ubiquitinated at Lys-60, Lys-103 and Lys-104 by UBE3A, promoting its degradation by the proteasome. Ubiquitination at Lys-20 impairs the association with the lysosomal V-ATPase complex. Deubiquitination at Lys-20 by USP32 promotes the association with the lysosomal V-ATPase complex and subsequent activation of the mTORC1 complex.

The protein resides in the lysosome membrane. It is found in the late endosome membrane. Functionally, key component of the Ragulator complex, a multiprotein complex involved in amino acid sensing and activation of mTORC1, a signaling complex promoting cell growth in response to growth factors, energy levels, and amino acids. Activated by amino acids through a mechanism involving the lysosomal V-ATPase, the Ragulator plays a dual role for the small GTPases Rag (RagA/RRAGA, RagB/RRAGB, RagC/RRAGC and/or RagD/RRAGD): it (1) acts as a guanine nucleotide exchange factor (GEF), activating the small GTPases Rag and (2) mediates recruitment of Rag GTPases to the lysosome membrane. Activated Ragulator and Rag GTPases function as a scaffold recruiting mTORC1 to lysosomes where it is in turn activated. LAMTOR1 is directly responsible for anchoring the Ragulator complex to the lysosomal membrane. LAMTOR1 wraps around the other subunits of the Ragulator complex to hold them in place and interacts with the Rag GTPases, thereby playing a key role in the recruitment of the mTORC1 complex to lysosomes. Also involved in the control of embryonic stem cells differentiation via non-canonical RagC/RRAGC and RagD/RRAGD activation: together with FLCN, it is necessary to recruit and activate RagC/RRAGC and RagD/RRAGD at the lysosomes, and to induce exit of embryonic stem cells from pluripotency via non-canonical, mTOR-independent TFE3 inactivation. Also required for late endosomes/lysosomes biogenesis it may regulate both the recycling of receptors through endosomes and the MAPK signaling pathway through recruitment of some of its components to late endosomes. May be involved in cholesterol homeostasis regulating LDL uptake and cholesterol release from late endosomes/lysosomes. May also play a role in RHOA activation. This is Ragulator complex protein LAMTOR1 from Homo sapiens (Human).